The sequence spans 321 residues: Methionyl-tRNA formyltransferase (321 aa).

111–114 contacts (6S)-5,6,7,8-tetrahydrofolate; that stretch reads GLLP.

This sequence belongs to the Fmt family.

It carries out the reaction L-methionyl-tRNA(fMet) + (6R)-10-formyltetrahydrofolate = N-formyl-L-methionyl-tRNA(fMet) + (6S)-5,6,7,8-tetrahydrofolate + H(+). Functionally, attaches a formyl group to the free amino group of methionyl-tRNA(fMet). The formyl group appears to play a dual role in the initiator identity of N-formylmethionyl-tRNA by promoting its recognition by IF2 and preventing the misappropriation of this tRNA by the elongation apparatus. This is Methionyl-tRNA formyltransferase from Chlamydia abortus (strain DSM 27085 / S26/3) (Chlamydophila abortus).